Reading from the N-terminus, the 205-residue chain is Cerebellin-3 (205 aa).

Positions 1–32 are cleaved as a signal peptide; that stretch reads MLGTKRHWPPGPSLSLELPLALTLLALRAGWA. The 139-residue stretch at 67 to 205 folds into the C1q domain; it reads APPGRVAFAA…SFSGFLIFPL (139 aa). N90 carries an N-linked (GlcNAc...) asparagine glycan.

As to quaternary structure, heterohexamer; disulfide-linked heterotrimers. Interacts with CBLN1. May also form oligomers with CBLN2 and CBLN4.

The protein resides in the endoplasmic reticulum. Its subcellular location is the golgi apparatus. It is found in the cis-Golgi network. The protein localises to the secreted. It localises to the synapse. May be involved in synaptic functions in the CNS. This chain is Cerebellin-3 (CBLN3), found in Bos taurus (Bovine).